The following is a 334-amino-acid chain: MIKTFIKERGSWILIIIFLQCFTVFIAYLDSAIPLAPVFYSVFLSSMIFLFFLAVRYKKETTFYRKLEEWDKDLDVTNLAAAESPFERIIEQTIVKQTGYLQEKAHRHETALEQEKDDLLAWIHEIKTPLTAMHLIIDRLEDRTIKGQLTYEWMRIHLLLDQQLHQKRIPFMENDLYVEKVNLESVLHQEIKTLQSWCIQKGIGFDLQLEVTDVLTDAKWLSFILRQLLSNAVKYSEASDIIIKSDVVSGKTVVEVTDFGRGIEPKDLPRIFEKGFTSTKTDQTNGATGMGLYLAKRVAEPLLIDLAVSSTVGEGTTFTLTFPKENEFVRTLGM.

2 helical membrane-spanning segments follow: residues Ile13–Ile33 and Leu35–Val55. In terms of domain architecture, Histidine kinase spans Ala121–Asn326. The residue at position 124 (His124) is a Phosphohistidine; by autocatalysis.

It is found in the cell membrane. The catalysed reaction is ATP + protein L-histidine = ADP + protein N-phospho-L-histidine.. In terms of biological role, member of the two-component regulatory system BceS/BceR involved in the regulation of bacitracin resistance. Activates BceR in response to extracellular bacitracin. The polypeptide is Sensor protein BceS (bceS) (Halalkalibacterium halodurans (strain ATCC BAA-125 / DSM 18197 / FERM 7344 / JCM 9153 / C-125) (Bacillus halodurans)).